A 602-amino-acid polypeptide reads, in one-letter code: Elongation factor 4 (602 aa).

Positions 7-189 (SRLRNFCIIA…AVVERVPPPK (183 aa)) constitute a tr-type G domain. Residues 19-24 (DHGKST) and 136-139 (NKVD) contribute to the GTP site.

Belongs to the TRAFAC class translation factor GTPase superfamily. Classic translation factor GTPase family. LepA subfamily.

The protein resides in the cell inner membrane. It catalyses the reaction GTP + H2O = GDP + phosphate + H(+). Functionally, required for accurate and efficient protein synthesis under certain stress conditions. May act as a fidelity factor of the translation reaction, by catalyzing a one-codon backward translocation of tRNAs on improperly translocated ribosomes. Back-translocation proceeds from a post-translocation (POST) complex to a pre-translocation (PRE) complex, thus giving elongation factor G a second chance to translocate the tRNAs correctly. Binds to ribosomes in a GTP-dependent manner. This is Elongation factor 4 from Prochlorococcus marinus (strain MIT 9211).